Reading from the N-terminus, the 141-residue chain is Protein X (141 aa).

Residues 25-48 (SSGPSFPRPAAGSAASSASSPSPS) are compositionally biased toward low complexity. The disordered stretch occupies residues 25–52 (SSGPSFPRPAAGSAASSASSPSPSDESD). The mitochondrial targeting sequence stretch occupies residues 68-113 (PCCLVFTCADLRTMDSTVNFVSWHANRQLGMPSKDLWTPYIKDQLL).

The protein belongs to the orthohepadnavirus protein X family. In terms of assembly, may form homodimer. May interact with host CEBPA, CFLAR, CREB1, DDB1, E4F1, HBXIP, HSPD1/HSP60, NFKBIA, POLR2E and SMAD4. Interacts with host SMC5-SMC6 complex and induces its degradation. Interacts with host TRPC4AP; leading to prevent ubiquitination of TRPC4AP. Interacts with host PLSCR1; this interaction promotes ubiquitination and degradation of HBx and impairs HBx-mediated cell proliferation. In terms of processing, a fraction may be phosphorylated in insect cells and HepG2 cells, a human hepatoblastoma cell line. Phosphorylated in vitro by host protein kinase C or mitogen-activated protein kinase. N-acetylated in insect cells.

It is found in the host cytoplasm. The protein resides in the host nucleus. It localises to the host mitochondrion. In terms of biological role, multifunctional protein that plays a role in silencing host antiviral defenses and promoting viral transcription. Does not seem to be essential for HBV infection. May be directly involved in development of cirrhosis and liver cancer (hepatocellular carcinoma). Most of cytosolic activities involve modulation of cytosolic calcium. The effect on apoptosis is controversial depending on the cell types in which the studies have been conducted. May induce apoptosis by localizing in mitochondria and causing loss of mitochondrial membrane potential. May also modulate apoptosis by binding host CFLAR, a key regulator of the death-inducing signaling complex (DISC). Promotes viral transcription by using the host E3 ubiquitin ligase DDB1 to target the SMC5-SMC6 complex to proteasomal degradation. This host complex would otherwise bind to viral episomal DNA, and prevents its transcription. Moderately stimulates transcription of many different viral and cellular transcription elements. Promoters and enhancers stimulated by HBx contain DNA binding sites for NF-kappa-B, AP-1, AP-2, c-EBP, ATF/CREB, or the calcium-activated factor NF-AT. The protein is Protein X of Marmota monax (Woodchuck).